The chain runs to 142 residues: Large ribosomal subunit protein uL13 (142 aa).

This sequence belongs to the universal ribosomal protein uL13 family. Part of the 50S ribosomal subunit.

Functionally, this protein is one of the early assembly proteins of the 50S ribosomal subunit, although it is not seen to bind rRNA by itself. It is important during the early stages of 50S assembly. In Bordetella avium (strain 197N), this protein is Large ribosomal subunit protein uL13.